Consider the following 379-residue polypeptide: Heme chaperone HemW (379 aa).

The Radical SAM core domain maps to 1–233 (MKSAYIHIPF…MSKMEAHGIH (233 aa)). Tyr5 is an S-adenosyl-L-methionine binding site. Residues Cys11, Cys15, and Cys18 each contribute to the [4Fe-4S] cluster site. Residues Gly60, 61–62 (GT), Glu94, Gln121, Arg133, and Asp158 each bind S-adenosyl-L-methionine.

This sequence belongs to the anaerobic coproporphyrinogen-III oxidase family. HemW subfamily. Requires [4Fe-4S] cluster as cofactor.

The protein localises to the cytoplasm. In terms of biological role, probably acts as a heme chaperone, transferring heme to an unknown acceptor. Binds one molecule of heme per monomer, possibly covalently. Binds 1 [4Fe-4S] cluster. The cluster is coordinated with 3 cysteines and an exchangeable S-adenosyl-L-methionine. The protein is Heme chaperone HemW of Bacillus subtilis (strain 168).